A 295-amino-acid polypeptide reads, in one-letter code: Protease HtpX (295 aa).

The next 2 membrane-spanning stretches (helical) occupy residues I4 to L24 and Q42 to S62. H147 lines the Zn(2+) pocket. The active site involves E148. H151 is a Zn(2+) binding site. A run of 2 helical transmembrane segments spans residues V158–I178 and V199–F219. Position 224 (E224) interacts with Zn(2+).

The protein belongs to the peptidase M48B family. Zn(2+) serves as cofactor.

It localises to the cell inner membrane. This chain is Protease HtpX, found in Pseudomonas fluorescens (strain ATCC BAA-477 / NRRL B-23932 / Pf-5).